The chain runs to 99 residues: Gibberellin-regulated protein 3 (99 aa).

The N-terminal stretch at 1–26 (MAIFRSTLVLLLILFCLTTFELHVHA) is a signal peptide.

It belongs to the GASA family. Six disulfide bonds may be present. As to expression, expressed in siliques, dry seeds and vasculature of roots and rosette leaves.

The protein resides in the secreted. Gibberellin-regulated protein that may function in hormonal controlled steps of development such as seed germination, flowering and seed maturation. This Arabidopsis thaliana (Mouse-ear cress) protein is Gibberellin-regulated protein 3 (GASA3).